Consider the following 175-residue polypeptide: Nucleoside triphosphate/diphosphate phosphatase (175 aa).

Arg-23 serves as the catalytic Proton donor. The Mg(2+) site is built by Asn-87, Asp-103, Asp-105, Asp-107, Asp-120, and Glu-123.

This sequence belongs to the Ntdp family. The cofactor is Mg(2+).

It carries out the reaction a ribonucleoside 5'-triphosphate + H2O = a ribonucleoside 5'-diphosphate + phosphate + H(+). It catalyses the reaction a ribonucleoside 5'-diphosphate + H2O = a ribonucleoside 5'-phosphate + phosphate + H(+). Has nucleoside phosphatase activity towards nucleoside triphosphates and nucleoside diphosphates. In Shouchella clausii (strain KSM-K16) (Alkalihalobacillus clausii), this protein is Nucleoside triphosphate/diphosphate phosphatase.